A 559-amino-acid polypeptide reads, in one-letter code: Putative helicase 22 (559 aa).

In terms of domain architecture, Helicase ATP-binding spans 186 to 347; the sequence is VSDVNVIGNG…EIMGLLGKIS (162 aa). Position 199-206 (199-206) interacts with ATP; it reads APTGSGKS. The DEAH box signature appears at 300 to 303; that stretch reads DEAH. A Helicase C-terminal domain is found at 410 to 552; sequence TNKQIISKIK…KMNFIENEYN (143 aa).

This chain is Putative helicase 22 (SIFV0022), found in Sulfolobus islandicus filamentous virus (isolate Iceland/Hveragerdi) (SIFV).